The sequence spans 293 residues: MDLGKVITAMVTPIHPEKDKVCKKRIHHLVNHLIKNGSDGLVIAGTTGESPTLSHDEKIKLFRQVIETNDGRAKLIAGTGSNNTAETIAFTKEVAELGGIDAVLIVAPYYNKPNQDGLYAHFAAVSEASDLPVVIYNIPGRSVVNIEPETIIRLAKLPNIVGVKESSGNLDNISKIIAETSDDFQVYSGDDSLTLPILAVGGNGVISVASHVVGNEMQEMIQAFERGEVQKAAQIHRELLPLMNGLFSVPNPAPTKYLLNQQGISVGPVRLPLVDLNAEQGTKLQAILEGLSK.

Thr47 lines the pyruvate pocket. Tyr136 serves as the catalytic Proton donor/acceptor. The active-site Schiff-base intermediate with substrate is the Lys164. A pyruvate-binding site is contributed by Ile206.

The protein belongs to the DapA family. In terms of assembly, homotetramer; dimer of dimers.

Its subcellular location is the cytoplasm. The catalysed reaction is L-aspartate 4-semialdehyde + pyruvate = (2S,4S)-4-hydroxy-2,3,4,5-tetrahydrodipicolinate + H2O + H(+). The protein operates within amino-acid biosynthesis; L-lysine biosynthesis via DAP pathway; (S)-tetrahydrodipicolinate from L-aspartate: step 3/4. Catalyzes the condensation of (S)-aspartate-beta-semialdehyde [(S)-ASA] and pyruvate to 4-hydroxy-tetrahydrodipicolinate (HTPA). The chain is 4-hydroxy-tetrahydrodipicolinate synthase from Listeria monocytogenes serotype 4b (strain CLIP80459).